Consider the following 332-residue polypeptide: Homoserine kinase (332 aa).

It belongs to the pseudomonas-type ThrB family.

The enzyme catalyses L-homoserine + ATP = O-phospho-L-homoserine + ADP + H(+). It participates in amino-acid biosynthesis; L-threonine biosynthesis; L-threonine from L-aspartate: step 4/5. The chain is Homoserine kinase from Burkholderia multivorans (strain ATCC 17616 / 249).